Reading from the N-terminus, the 620-residue chain is MNINLDSAKGTLCKNILIYGYCKYENKGCAFSHRRNNNANSGPGATPAKSVATTPTSDKRKFNVNTPSFQPSTAPVQGLANKFAGLSPKVKDIPVFVPSGTPASPAQSTPSTGNQEQPMPTSTVSNVPERKFNTSTPSFTPSQPIPAPPPQNTSSPPTNPYLMNQPGPPTDMYYQSAYPLQYHLYAPAPPPRLAITHSSHQVDAHSLFIDSELRETLQKRNEATLQSYPGGPEIVDVYHTVVPIAAEGVSKIWKVSSSVYKGVSNVDGNVYALRKIEDFKIINETPFRTIKRWHGLQSANIVKIQDAFTTVAFGSPSLVVAYDYYPNASTLLEQHVNRRLGGRLEPLTEDILWLYLTQLVNAVRTVHKKKLAARSSLDLSKIIVTTNRIRLAAIGMSDILNWEADDAEIARVGLPTYMENLQQEDIRNMARLMVDLTTVMNPVVQNDIFKLKSSGLSTDFVAAVQDLSNTDDLESYIRKHLAIRLLDVVDMLEDSNDYLESQLSTELENARLVRLMTKINFIVDRPEWDNEATAAAAGWTENGPKYLLKLFRDFVFFQTDEMGKPVTDLSRVLVTLNKLDAGIDEKFLLVSRDEKTCIVVSYKEIRDLLESVFRTITRGK.

The segment at 7–36 (SAKGTLCKNILIYGYCKYENKGCAFSHRRN) adopts a C3H1-type zinc-finger fold. Disordered regions lie at residues 39-73 (ANSG…QPST) and 95-168 (VFVP…QPGP). Polar residues-rich tracts occupy residues 63 to 73 (NVNTPSFQPST) and 101 to 126 (TPAS…TVSN). A pseudokinase domain region spans residues 226 to 482 (QSYPGGPEIV…LESYIRKHLA (257 aa)). ATP contacts are provided by residues R274, 323-330 (DYYPNAST), and 380-381 (SK). Residues 483-521 (IRLLDVVDMLEDSNDYLESQLSTELENARLVRLMTKINF) are a coiled coil. Residues 522–620 (IVDRPEWDNE…SVFRTITRGK (99 aa)) form a knob domain region.

This sequence belongs to the protein kinase superfamily. PAN3 family. Homodimer. Forms a heterotrimer with a catalytic subunit PAN2 to form the poly(A)-nuclease (PAN) deadenylation complex. Interacts (via PAM-2 motif) with poly(A)-binding protein PAB1 (via PABC domain), conferring substrate specificity of the enzyme complex.

It localises to the cytoplasm. Regulatory subunit of the poly(A)-nuclease (PAN) deadenylation complex, one of two cytoplasmic mRNA deadenylases involved in mRNA turnover. PAN specifically shortens poly(A) tails of RNA and the activity is stimulated by poly(A)-binding protein PAB1. PAN deadenylation is followed by rapid degradation of the shortened mRNA tails by the CCR4-NOT complex. Deadenylated mRNAs are then degraded by two alternative mechanisms, namely exosome-mediated 3'-5' exonucleolytic degradation, or deadenylation-dependent mRNA decaping and subsequent 5'-3' exonucleolytic degradation by XRN1. May also be involved in post-transcriptional maturation of mRNA poly(A) tails. PAN3 acts as a positive regulator for PAN activity, recruiting the catalytic subunit PAN2 to mRNA via its interaction with RNA and with PAB1. The protein is PAN2-PAN3 deadenylation complex subunit PAN3 of Meyerozyma guilliermondii (strain ATCC 6260 / CBS 566 / DSM 6381 / JCM 1539 / NBRC 10279 / NRRL Y-324) (Yeast).